Consider the following 571-residue polypeptide: Cerebral cavernous malformations 2 protein-like (571 aa).

Disordered regions lie at residues 164–193 (AGVD…GTAE), 212–295 (AEAR…PQDP), and 544–571 (LAPD…DNYL). A compositionally biased stretch (basic and acidic residues) spans 184–193 (PEKRRVGTAE). The segment covering 212–223 (AEARAGGGGGGS) has biased composition (gly residues). Residues 237 to 251 (WERRQTFSGSWERRH) show a composition bias toward basic and acidic residues. Gly residues predominate over residues 253 to 264 (GGGGGGGAGKPG). A compositionally biased stretch (pro residues) spans 286 to 295 (GPNPLDPQDP). The segment covering 545-555 (APDDDDDDEDE) has biased composition (acidic residues).

It belongs to the CCM2 family.

In Homo sapiens (Human), this protein is Cerebral cavernous malformations 2 protein-like (CCM2L).